Consider the following 174-residue polypeptide: ATP-dependent protease subunit HslV (174 aa).

Threonine 2 is an active-site residue. Na(+) is bound by residues glycine 157, cysteine 160, and threonine 163.

The protein belongs to the peptidase T1B family. HslV subfamily. In terms of assembly, a double ring-shaped homohexamer of HslV is capped on each side by a ring-shaped HslU homohexamer. The assembly of the HslU/HslV complex is dependent on binding of ATP.

It is found in the cytoplasm. The enzyme catalyses ATP-dependent cleavage of peptide bonds with broad specificity.. Allosterically activated by HslU binding. Its function is as follows. Protease subunit of a proteasome-like degradation complex believed to be a general protein degrading machinery. The protein is ATP-dependent protease subunit HslV of Yersinia pseudotuberculosis serotype I (strain IP32953).